The following is a 110-amino-acid chain: ATP-dependent Clp protease adapter protein ClpS (110 aa).

Belongs to the ClpS family. As to quaternary structure, binds to the N-terminal domain of the chaperone ClpA.

Involved in the modulation of the specificity of the ClpAP-mediated ATP-dependent protein degradation. This chain is ATP-dependent Clp protease adapter protein ClpS, found in Bartonella henselae (strain ATCC 49882 / DSM 28221 / CCUG 30454 / Houston 1) (Rochalimaea henselae).